An 80-amino-acid polypeptide reads, in one-letter code: Protein P9 (80 aa).

As to quaternary structure, self-associates.

The sequence is that of Protein P9 from Beta vulgaris (Sugar beet).